A 354-amino-acid chain; its full sequence is 3'-hydroxy-N-methyl-(S)-coclaurine 4'-O-methyltransferase 1 (354 aa).

Asp223 contacts S-adenosyl-L-methionine. His261 serves as the catalytic Proton acceptor.

The protein belongs to the class I-like SAM-binding methyltransferase superfamily. Cation-independent O-methyltransferase family. COMT subfamily. In terms of tissue distribution, expressed in roots, stems, leaves and flowers. Restricted to sieve elements of the phloem adjacent or proximal to laticifers.

It carries out the reaction (S)-3'-hydroxy-N-methylcoclaurine + S-adenosyl-L-methionine = (S)-reticuline + S-adenosyl-L-homocysteine + H(+). Its pathway is alkaloid biosynthesis; (S)-reticuline biosynthesis; (S)-reticuline from (S)-norcoclaurine: step 4/4. In terms of biological role, involved in the biosynthesis of benzylisoquinoline alkaloids. Catalyzes the transfer of the methyl group to the 4'-hydroxyl group of 3'-hydroxy-N-methylcoclaurine to form reticuline. Also involved in the papaverine biosynthesis. The protein is 3'-hydroxy-N-methyl-(S)-coclaurine 4'-O-methyltransferase 1 of Papaver somniferum (Opium poppy).